A 424-amino-acid polypeptide reads, in one-letter code: 2,3-bisphosphoglycerate-independent phosphoglycerate mutase (424 aa).

Belongs to the BPG-independent phosphoglycerate mutase family. A-PGAM subfamily.

The catalysed reaction is (2R)-2-phosphoglycerate = (2R)-3-phosphoglycerate. It functions in the pathway carbohydrate degradation; glycolysis; pyruvate from D-glyceraldehyde 3-phosphate: step 3/5. Functionally, catalyzes the interconversion of 2-phosphoglycerate and 3-phosphoglycerate. This is 2,3-bisphosphoglycerate-independent phosphoglycerate mutase from Aeropyrum pernix (strain ATCC 700893 / DSM 11879 / JCM 9820 / NBRC 100138 / K1).